Here is a 346-residue protein sequence, read N- to C-terminus: tRNA N6-adenosine threonylcarbamoyltransferase (346 aa).

Fe cation contacts are provided by H110 and H114. Residues 132–136 (LLSGG), D165, G178, and N274 each bind substrate. D298 contributes to the Fe cation binding site.

It belongs to the KAE1 / TsaD family. Requires Fe(2+) as cofactor.

It localises to the cytoplasm. The catalysed reaction is L-threonylcarbamoyladenylate + adenosine(37) in tRNA = N(6)-L-threonylcarbamoyladenosine(37) in tRNA + AMP + H(+). Required for the formation of a threonylcarbamoyl group on adenosine at position 37 (t(6)A37) in tRNAs that read codons beginning with adenine. Is involved in the transfer of the threonylcarbamoyl moiety of threonylcarbamoyl-AMP (TC-AMP) to the N6 group of A37, together with TsaE and TsaB. TsaD likely plays a direct catalytic role in this reaction. The protein is tRNA N6-adenosine threonylcarbamoyltransferase of Borreliella burgdorferi (strain ZS7) (Borrelia burgdorferi).